Reading from the N-terminus, the 181-residue chain is ATP synthase subunit b, chloroplastic (181 aa).

The chain crosses the membrane as a helical span at residues 27–49 (LATNPINLSVVLGVVIYFGKGVL).

The protein belongs to the ATPase B chain family. In terms of assembly, F-type ATPases have 2 components, F(1) - the catalytic core - and F(0) - the membrane proton channel. F(1) has five subunits: alpha(3), beta(3), gamma(1), delta(1), epsilon(1). F(0) has four main subunits: a(1), b(1), b'(1) and c(10-14). The alpha and beta chains form an alternating ring which encloses part of the gamma chain. F(1) is attached to F(0) by a central stalk formed by the gamma and epsilon chains, while a peripheral stalk is formed by the delta, b and b' chains.

Its subcellular location is the plastid. It localises to the chloroplast thylakoid membrane. F(1)F(0) ATP synthase produces ATP from ADP in the presence of a proton or sodium gradient. F-type ATPases consist of two structural domains, F(1) containing the extramembraneous catalytic core and F(0) containing the membrane proton channel, linked together by a central stalk and a peripheral stalk. During catalysis, ATP synthesis in the catalytic domain of F(1) is coupled via a rotary mechanism of the central stalk subunits to proton translocation. Its function is as follows. Component of the F(0) channel, it forms part of the peripheral stalk, linking F(1) to F(0). The chain is ATP synthase subunit b, chloroplastic from Lemna minor (Common duckweed).